A 1349-amino-acid chain; its full sequence is Nitric oxide synthase (1349 aa).

Residues 23 to 195 are disordered; the sequence is AQQQQQQQQQ…QPRKMSQDYR (173 aa). 2 stretches are compositionally biased toward low complexity: residues 24–51 and 64–73; these read QQQQ…TQQQ and LNGNGLLSGN. The segment covering 142–159 has biased composition (gly residues); sequence SGSGSGSGGGGVGVGQGA. Over residues 165 to 189 the composition is skewed to polar residues; it reads GSCTASGKSSRELSPSPKNQQQPRK. (6R)-L-erythro-5,6,7,8-tetrahydrobiopterin is bound at residue Ser-250. Cys-328 serves as a coordination point for heme b. Positions 391, 500, 501, 505, and 510 each coordinate L-arginine. The (6R)-L-erythro-5,6,7,8-tetrahydrobiopterin site is built by Trp-591 and Phe-604. Residue Tyr-619 participates in heme b binding. The tract at residues 641 to 661 is calmodulin-binding; sequence PRRKFNFKQIARAVKFTSKLF. The Flavodoxin-like domain occupies 671-868; that stretch reads ATVLYATETG…SFRKWAPEVF (198 aa). 814–845 is an FMN binding site; it reads VFALGSSAYPNFCAFGQYVDNILGELGGERLL. In terms of domain architecture, FAD-binding FR-type spans 928–1167; that stretch reads AKAKPHNLTR…VRSALGFHLP (240 aa). FAD is bound by residues 957–968 and 1100–1110; these read YEPGDHVGIFPA and LQPRFYSISSS. NADP(+)-binding positions include 1175-1193 and 1273-1287; these read ILIG…WQEF and GHIY…AEHV.

Belongs to the NOS family. The cofactor is heme b. FAD is required as a cofactor. Requires FMN as cofactor.

The enzyme catalyses 2 L-arginine + 3 NADPH + 4 O2 + H(+) = 2 L-citrulline + 2 nitric oxide + 3 NADP(+) + 4 H2O. Its activity is regulated as follows. Stimulated by calcium/calmodulin. Its function is as follows. Catalyzes the conversion of L-arginine to L-citrulline producing nitric oxide (NO) which is a messenger molecule with diverse functions throughout the body. Truncated isoforms (isoform 3-isoform 6) are able to form intracellular complexes with the full-length protein and serve as dominant negative inhibitors of the enzyme activity. The protein is Nitric oxide synthase (Nos) of Drosophila melanogaster (Fruit fly).